The following is a 113-amino-acid chain: U11-theraphotoxin-Hhn1a (113 aa).

The first 21 residues, 1 to 21, serve as a signal peptide directing secretion; that stretch reads MNTVRVTFLLVFVLAVSLGQA. The propeptide occupies 22-74; that stretch reads DKDENRMEMQEKTEQGKSYLDFAENLLLQKLEELEAKLLEEDSEESRNSRQKR. The tract at residues 61 to 83 is disordered; sequence EEDSEESRNSRQKRCIGEGVPCD. 3 cysteine pairs are disulfide-bonded: cysteine 75–cysteine 90, cysteine 82–cysteine 95, and cysteine 89–cysteine 110.

Belongs to the neurotoxin 14 (magi-1) family. 01 (HNTX-16) subfamily. In terms of tissue distribution, expressed by the venom gland.

It is found in the secreted. Probable ion channel inhibitor. The sequence is that of U11-theraphotoxin-Hhn1a from Cyriopagopus hainanus (Chinese bird spider).